The chain runs to 207 residues: N-(5'-phosphoribosyl)anthranilate isomerase (207 aa).

It belongs to the TrpF family.

The catalysed reaction is N-(5-phospho-beta-D-ribosyl)anthranilate = 1-(2-carboxyphenylamino)-1-deoxy-D-ribulose 5-phosphate. Its pathway is amino-acid biosynthesis; L-tryptophan biosynthesis; L-tryptophan from chorismate: step 3/5. In Halorhodospira halophila (strain DSM 244 / SL1) (Ectothiorhodospira halophila (strain DSM 244 / SL1)), this protein is N-(5'-phosphoribosyl)anthranilate isomerase.